Consider the following 822-residue polypeptide: Nose resistant to fluoxetine protein 6 (822 aa).

The first 24 residues, 1 to 24, serve as a signal peptide directing secretion; sequence MGNMRRLLIFAVLVILTVISNSKS. Residue asparagine 236 is glycosylated (N-linked (GlcNAc...) asparagine). The next 3 helical transmembrane spans lie at 306 to 326, 617 to 637, and 655 to 675; these read LAMF…FGTL, PYIR…LNAW, and IICW…LYWF.

The protein belongs to the acyltransferase 3 family. In terms of tissue distribution, in L1 larvae through to adult, hyp3 and hyp5, the most anterior cells in the hypodermis, and in intestine. Other hypodermal cells show weaker expression.

The protein resides in the membrane. Its function is as follows. Plays a role in the uptake of a range of molecules including lipids and xenobiotic compounds from the intestine to surrounding tissues. Mediates transport of lipids from intestine to the reproductive tract. Required for efficient yolk transport into oocytes. Vital for embryonic development. The protein is Nose resistant to fluoxetine protein 6 (nrf-6) of Caenorhabditis elegans.